Consider the following 83-residue polypeptide: MSEFWLCFNCCIAEQPQPRRRRIDRSMIGEPTNFVHTAHVGSGDLFSGMNSVSSIQNQMQSKGGYGGGMPANVQMQLVDTKAG.

2 S-palmitoyl cysteine lipidation sites follow: Cys10 and Cys11. A CRIB domain is found at 28-41 (IGEPTNFVHTAHVG). Phosphoserine is present on residues Ser42 and Ser51.

This sequence belongs to the CDC42SE/SPEC family. Interacts with CDC42 (in GTP-bound form). Interacts weakly with RAC1 and not at all with RHOA.

It is found in the cytoplasm. Its subcellular location is the cytoskeleton. It localises to the cell membrane. The protein localises to the cell projection. The protein resides in the phagocytic cup. Its function is as follows. Probably involved in the organization of the actin cytoskeleton by acting downstream of CDC42, inducing actin filament assembly. Alters CDC42-induced cell shape changes. In activated T-cells, may play a role in CDC42-mediated F-actin accumulation at the immunological synapse. May play a role in early contractile events in phagocytosis in macrophages. This Rattus norvegicus (Rat) protein is CDC42 small effector protein 2 (Cdc42se2).